We begin with the raw amino-acid sequence, 561 residues long: Tectonic-like complex member MKS1 (561 aa).

Positions 314-442 (LRLFVNGEVV…TASTWRPMEL (129 aa)) constitute a C2 B9-type domain.

As to quaternary structure, part of the tectonic-like complex (also named B9 complex). Interacts with TMEM107. Interacts with TCTN3, AHI1, TCTN1, TCTN2, CC2D2A. Interacts with FLNA. Interacts with TMEM67. Interacts with B9D1 and B9D2.

It localises to the cytoplasm. The protein localises to the cytoskeleton. It is found in the cilium basal body. Its subcellular location is the microtubule organizing center. The protein resides in the centrosome. Functionally, component of the tectonic-like complex, a complex localized at the transition zone of primary cilia and acting as a barrier that prevents diffusion of transmembrane proteins between the cilia and plasma membranes. Involved in centrosome migration to the apical cell surface during early ciliogenesis. Required for ciliary structure and function, including a role in regulating length and appropriate number through modulating centrosome duplication. Required for cell branching morphology. This Rattus norvegicus (Rat) protein is Tectonic-like complex member MKS1 (Mks1).